We begin with the raw amino-acid sequence, 233 residues long: Large ribosomal subunit protein uL1 (233 aa).

It belongs to the universal ribosomal protein uL1 family. In terms of assembly, part of the 50S ribosomal subunit.

Its function is as follows. Binds directly to 23S rRNA. The L1 stalk is quite mobile in the ribosome, and is involved in E site tRNA release. Protein L1 is also a translational repressor protein, it controls the translation of the L11 operon by binding to its mRNA. This is Large ribosomal subunit protein uL1 from Rhizobium etli (strain CIAT 652).